The sequence spans 123 residues: Non-specific lipid-transfer protein (123 aa).

The signal sequence occupies residues 1 to 25 (MAVKKMVEAVFVVGLVVTMMNVWGA). Intrachain disulfides connect Cys-34/Cys-82, Cys-44/Cys-59, Cys-60/Cys-104, and Cys-80/Cys-119.

This sequence belongs to the plant LTP family.

Functionally, plant non-specific lipid-transfer proteins transfer phospholipids as well as galactolipids across membranes. May play a role in wax or cutin deposition in the cell walls of expanding epidermal cells and certain secretory tissues. The sequence is that of Non-specific lipid-transfer protein from Pinus taeda (Loblolly pine).